The chain runs to 420 residues: Gamma-glutamyl phosphate reductase (420 aa).

This sequence belongs to the gamma-glutamyl phosphate reductase family.

The protein localises to the cytoplasm. The catalysed reaction is L-glutamate 5-semialdehyde + phosphate + NADP(+) = L-glutamyl 5-phosphate + NADPH + H(+). It functions in the pathway amino-acid biosynthesis; L-proline biosynthesis; L-glutamate 5-semialdehyde from L-glutamate: step 2/2. In terms of biological role, catalyzes the NADPH-dependent reduction of L-glutamate 5-phosphate into L-glutamate 5-semialdehyde and phosphate. The product spontaneously undergoes cyclization to form 1-pyrroline-5-carboxylate. The protein is Gamma-glutamyl phosphate reductase of Acidiphilium cryptum (strain JF-5).